A 308-amino-acid chain; its full sequence is B- and T-lymphocyte attenuator (308 aa).

A signal peptide spans 1–29 (MKTVPAMLVTPRSFREFFILLLGLWSILC). Residues 30–183 (KEPTKRIGEE…ERPGRTWLLY (154 aa)) lie on the Extracellular side of the membrane. Positions 32-134 (PTKRIGEECR…SANLNSEVIN (103 aa)) constitute an Ig-like V-type domain. 3 disulfide bridges follow: C40–C69, C64–C124, and C78–C85. N-linked (GlcNAc...) asparagine glycans are attached at residues N49, N74, N81, N148, and N165. A helical transmembrane segment spans residues 184–204 (ALLPLGTSLLLLACVCLLCFL). Topologically, residues 205-308 (RRIQGKEKKP…TEYASICVRS (104 aa)) are cytoplasmic.

As to quaternary structure, interacts with tyrosine phosphatases PTPN6/SHP-1 and PTPN11/SHP-2. Interacts with TNFRSF14/HVEM (via cysteine-rich domain 1). Phosphorylated on Tyr residues by TNFRSF14 and by antigen receptors cross-linking, both inducing association with PTPN6 and PTPN11. Post-translationally, N-glycosylated.

Its subcellular location is the cell membrane. Its function is as follows. Inhibitory receptor on lymphocytes that negatively regulates antigen receptor signaling via PTPN6/SHP-1 and PTPN11/SHP-2. May interact in cis (on the same cell) or in trans (on other cells) with TNFRSF14. In cis interactions, appears to play an immune regulatory role inhibiting in trans interactions in naive T cells to maintain a resting state. In trans interactions, can predominate during adaptive immune response to provide survival signals to effector T cells. This chain is B- and T-lymphocyte attenuator, found in Rattus norvegicus (Rat).